A 270-amino-acid chain; its full sequence is Putative phosphoenolpyruvate synthase regulatory protein (270 aa).

An ADP-binding site is contributed by 150 to 157 (GVSRCGKT).

It belongs to the pyruvate, phosphate/water dikinase regulatory protein family. PSRP subfamily.

The enzyme catalyses [pyruvate, water dikinase] + ADP = [pyruvate, water dikinase]-phosphate + AMP + H(+). The catalysed reaction is [pyruvate, water dikinase]-phosphate + phosphate + H(+) = [pyruvate, water dikinase] + diphosphate. Functionally, bifunctional serine/threonine kinase and phosphorylase involved in the regulation of the phosphoenolpyruvate synthase (PEPS) by catalyzing its phosphorylation/dephosphorylation. The chain is Putative phosphoenolpyruvate synthase regulatory protein from Shewanella amazonensis (strain ATCC BAA-1098 / SB2B).